Consider the following 93-residue polypeptide: Muconolactone Delta-isomerase (93 aa).

It belongs to the muconolactone Delta-isomerase family. In terms of assembly, homodecamer.

The catalysed reaction is (S)-muconolactone = (4,5-dihydro-5-oxofuran-2-yl)-acetate. The protein operates within aromatic compound metabolism; beta-ketoadipate pathway; 5-oxo-4,5-dihydro-2-furylacetate from catechol: step 3/3. The polypeptide is Muconolactone Delta-isomerase (catC) (Rhodococcus opacus (Nocardia opaca)).